The primary structure comprises 277 residues: Large ribosomal subunit protein uL2 (277 aa).

A disordered region spans residues 222–277; the sequence is GVAMNPVDHPHGGGEGRTSGGRHPVSPWGKPTKGKRTRSNKATDKFIMRTRHQRKK.

It belongs to the universal ribosomal protein uL2 family. As to quaternary structure, part of the 50S ribosomal subunit. Forms a bridge to the 30S subunit in the 70S ribosome.

In terms of biological role, one of the primary rRNA binding proteins. Required for association of the 30S and 50S subunits to form the 70S ribosome, for tRNA binding and peptide bond formation. It has been suggested to have peptidyltransferase activity; this is somewhat controversial. Makes several contacts with the 16S rRNA in the 70S ribosome. This Bartonella tribocorum (strain CIP 105476 / IBS 506) protein is Large ribosomal subunit protein uL2.